The following is a 452-amino-acid chain: Probable receptor-like protein kinase At5g20050 (452 aa).

The signal sequence occupies residues 1 to 23 (MEDKKANIIATILILALVVVIIA). Residues 24–33 (ARVSLKLSKT) are Extracellular-facing. The chain crosses the membrane as a helical span at residues 34 to 54 (FYLIAGVDISLILAVICFLII). Residues 55–452 (RSRYNKERKL…SSIISPISPR (398 aa)) are Cytoplasmic-facing. Residues 103 to 392 (DGFRSLIGKG…MVIEMLEGRV (290 aa)) form the Protein kinase domain. ATP-binding positions include 109-117 (IGKGGSGSV) and Lys-131. Tyr-178 carries the post-translational modification Phosphotyrosine. Asp-236 serves as the catalytic Proton acceptor. Phosphothreonine is present on residues Thr-270 and Thr-275.

Belongs to the protein kinase superfamily. Ser/Thr protein kinase family.

The protein localises to the membrane. It catalyses the reaction L-seryl-[protein] + ATP = O-phospho-L-seryl-[protein] + ADP + H(+). The catalysed reaction is L-threonyl-[protein] + ATP = O-phospho-L-threonyl-[protein] + ADP + H(+). This is Probable receptor-like protein kinase At5g20050 from Arabidopsis thaliana (Mouse-ear cress).